Here is a 182-residue protein sequence, read N- to C-terminus: Succinate dehydrogenase cytochrome b560 subunit, mitochondrial (182 aa).

The helical transmembrane segment at 65–94 (LTWMLSGFHRISGCVMAGTLLVGGIGFAVL) threads the bilayer. At 95-114 (PFDFTAFVDFIRSWNLPCAV) the chain is on the mitochondrial intermembrane side. A helical membrane pass occupies residues 115-139 (TAVFKYIIAFPIIFHTLNGIRFLGF). Residue His-129 coordinates heme. Over 140-147 (DLAKGVNN) the chain is Mitochondrial matrix. Residues 148-169 (VGQIYKSGYLVSGLSAILALAI) traverse the membrane as a helical segment. The Mitochondrial intermembrane segment spans residues 170–172 (VFN).

It belongs to the cytochrome b560 family. Component of complex II composed of four subunits: a flavoprotein (FP), iron-sulfur protein (IP), and a cytochrome b560 composed of two integral membrane proteins. Heme serves as cofactor.

It localises to the mitochondrion inner membrane. It participates in carbohydrate metabolism; tricarboxylic acid cycle. Its function is as follows. Membrane-anchoring subunit of succinate dehydrogenase (SDH) that is involved in complex II of the mitochondrial electron transport chain and is responsible for transferring electrons from succinate to ubiquinone (coenzyme Q). Mediates resistance to enteropathogenic E.coli infection. The protein is Succinate dehydrogenase cytochrome b560 subunit, mitochondrial (mev-1) of Caenorhabditis elegans.